We begin with the raw amino-acid sequence, 99 residues long: Gibberellin-regulated protein 3 (99 aa).

The signal sequence occupies residues 1–26 (MAIFRSTLVLLLILFCLTTFELHVHA).

Belongs to the GASA family. Post-translationally, six disulfide bonds may be present. As to expression, expressed in siliques, dry seeds and vasculature of roots and rosette leaves.

It is found in the secreted. Gibberellin-regulated protein that may function in hormonal controlled steps of development such as seed germination, flowering and seed maturation. The chain is Gibberellin-regulated protein 3 (GASA3) from Arabidopsis thaliana (Mouse-ear cress).